The sequence spans 559 residues: Formate--tetrahydrofolate ligase (559 aa).

68–75 (TPAGEGKT) is a binding site for ATP.

It belongs to the formate--tetrahydrofolate ligase family.

It carries out the reaction (6S)-5,6,7,8-tetrahydrofolate + formate + ATP = (6R)-10-formyltetrahydrofolate + ADP + phosphate. The protein operates within one-carbon metabolism; tetrahydrofolate interconversion. The sequence is that of Formate--tetrahydrofolate ligase from Rhizobium etli (strain CIAT 652).